A 79-amino-acid chain; its full sequence is Small ribosomal subunit protein uS17 (79 aa).

It belongs to the universal ribosomal protein uS17 family. In terms of assembly, part of the 30S ribosomal subunit.

In terms of biological role, one of the primary rRNA binding proteins, it binds specifically to the 5'-end of 16S ribosomal RNA. The chain is Small ribosomal subunit protein uS17 from Rhizobium rhizogenes (strain K84 / ATCC BAA-868) (Agrobacterium radiobacter).